A 478-amino-acid chain; its full sequence is ATP-dependent RNA helicase DDX19A (478 aa).

Position 2 is an N-acetylalanine (A2). The segment at 2–299 (ATDSWALAVD…DPNIIKLKRE (298 aa)) is N-terminal lobe. K26 participates in a covalent cross-link: Glycyl lysine isopeptide (Lys-Gly) (interchain with G-Cter in SUMO1); alternate. K26 is covalently cross-linked (Glycyl lysine isopeptide (Lys-Gly) (interchain with G-Cter in SUMO2); alternate). The tract at residues 31–55 (KPDTNGVIKTNATPEKTDEEEKEDR) is disordered. The N-terminal helix stretch occupies residues 54–67 (DRAAQSLLNKLIRS). Positions 91–119 (KSFEELRLKPQLLQGVYAMGFNRPSKIQE) match the Q motif motif. Residues Q118 and 137–144 (SQSGTGKT) each bind ATP. The 171-residue stretch at 124 to 294 (MMLAEPPQNL…QKVVPDPNII (171 aa)) folds into the Helicase ATP-binding domain. Residues 241-244 (DEAD) carry the DEAD box motif. The segment at 300–478 (EETLDTIKQY…DLDEIEKIAN (179 aa)) is C-terminal lobe. One can recognise a Helicase C-terminal domain in the interval 305-473 (TIKQYYVLCN…RLDTDDLDEI (169 aa)). Positions 428 and 431 each coordinate ATP.

The protein belongs to the DEAD box helicase family. DDX19/DBP5 subfamily.

Its subcellular location is the cytoplasm. The protein localises to the nucleus. It is found in the nucleoplasm. It carries out the reaction ATP + H2O = ADP + phosphate + H(+). Functionally, ATP-dependent RNA helicase involved in mRNA export from the nucleus. Rather than unwinding RNA duplexes, DDX19 functions as a remodeler of ribonucleoprotein particles, whereby proteins bound to nuclear mRNA are dissociated and replaced by cytoplasmic mRNA binding proteins. This Bos taurus (Bovine) protein is ATP-dependent RNA helicase DDX19A (DDX19A).